A 429-amino-acid polypeptide reads, in one-letter code: Histidine--tRNA ligase (429 aa).

This sequence belongs to the class-II aminoacyl-tRNA synthetase family. Homodimer.

The protein localises to the cytoplasm. The catalysed reaction is tRNA(His) + L-histidine + ATP = L-histidyl-tRNA(His) + AMP + diphosphate + H(+). This is Histidine--tRNA ligase from Pseudomonas putida (strain W619).